A 690-amino-acid chain; its full sequence is Elongation factor G (690 aa).

Residues Ser-8–Asn-283 enclose the tr-type G domain. Residues Ala-17–Thr-24, Asp-81–His-85, and Asn-135–Asp-138 each bind GTP.

It belongs to the TRAFAC class translation factor GTPase superfamily. Classic translation factor GTPase family. EF-G/EF-2 subfamily.

It localises to the cytoplasm. Functionally, catalyzes the GTP-dependent ribosomal translocation step during translation elongation. During this step, the ribosome changes from the pre-translocational (PRE) to the post-translocational (POST) state as the newly formed A-site-bound peptidyl-tRNA and P-site-bound deacylated tRNA move to the P and E sites, respectively. Catalyzes the coordinated movement of the two tRNA molecules, the mRNA and conformational changes in the ribosome. In Anaplasma phagocytophilum (strain HZ), this protein is Elongation factor G.